A 474-amino-acid polypeptide reads, in one-letter code: 3-isopropylmalate dehydratase large subunit (474 aa).

[4Fe-4S] cluster contacts are provided by Cys355, Cys415, and Cys418.

This sequence belongs to the aconitase/IPM isomerase family. LeuC type 1 subfamily. In terms of assembly, heterodimer of LeuC and LeuD. Requires [4Fe-4S] cluster as cofactor.

The catalysed reaction is (2R,3S)-3-isopropylmalate = (2S)-2-isopropylmalate. The protein operates within amino-acid biosynthesis; L-leucine biosynthesis; L-leucine from 3-methyl-2-oxobutanoate: step 2/4. Its function is as follows. Catalyzes the isomerization between 2-isopropylmalate and 3-isopropylmalate, via the formation of 2-isopropylmaleate. The protein is 3-isopropylmalate dehydratase large subunit of Shewanella oneidensis (strain ATCC 700550 / JCM 31522 / CIP 106686 / LMG 19005 / NCIMB 14063 / MR-1).